A 250-amino-acid chain; its full sequence is 5'-nucleotidase SurE (250 aa).

A divalent metal cation is bound by residues Asp8, Asp9, Ser39, and Asn91.

It belongs to the SurE nucleotidase family. A divalent metal cation is required as a cofactor.

The protein localises to the cytoplasm. The enzyme catalyses a ribonucleoside 5'-phosphate + H2O = a ribonucleoside + phosphate. Nucleotidase that shows phosphatase activity on nucleoside 5'-monophosphates. The protein is 5'-nucleotidase SurE of Syntrophotalea carbinolica (strain DSM 2380 / NBRC 103641 / GraBd1) (Pelobacter carbinolicus).